Consider the following 424-residue polypeptide: SWI/SNF and RSC complexes subunit arp42 (424 aa).

It belongs to the actin family. As to quaternary structure, component of the RSC complex composed of at least arp9, arp42, rsc1, rsc4, rsc7, rsc9, rsc58, sfh1, snf21, ssr1, ssr2, ssr3 and ssr4. The complex interacts with histone and histone variant components of centromeric chromatin. Component of the SWI/SNF global transcription activator complex composed of at least arp9, arp42, snf5, snf22, snf30, sbf59, sol1, ssr1, ssr2, ssr3, ssr4 and tfg3.

It is found in the cytoplasm. It localises to the nucleus. Functionally, component of the chromatin structure remodeling complex (RSC), which is involved in transcription regulation and nucleosome positioning. Controls particularly membrane and organelle development genes. Part of the SWI/SNF complex, an ATP-dependent chromatin remodeling complex, required for the positive and negative regulation of gene expression of a large number of genes. It changes chromatin structure by altering DNA-histone contacts within a nucleosome, leading eventually to a change in nucleosome position, thus facilitating or repressing binding of gene-specific transcription factors. The chain is SWI/SNF and RSC complexes subunit arp42 (arp42) from Schizosaccharomyces pombe (strain 972 / ATCC 24843) (Fission yeast).